Reading from the N-terminus, the 37-residue chain is Large ribosomal subunit protein bL36c (37 aa).

The protein belongs to the bacterial ribosomal protein bL36 family.

It localises to the plastid. It is found in the chloroplast. The sequence is that of Large ribosomal subunit protein bL36c from Cycas taitungensis (Prince sago).